The following is a 227-amino-acid chain: Calcium-binding protein 1 (227 aa).

G2 carries N-myristoyl glycine lipidation. C4 is lipidated: S-palmitoyl cysteine. 4 consecutive EF-hand domains span residues 82–117 (EEIE…MGYM), 136–153 (GHVD…KLLA), 159–194 (IGVK…LLGH), and 196–227 (VGHR…MMSR). Ca(2+) contacts are provided by D95, D97, D99, Y101, and D106. Residues D172, N174, D176, and E178 each coordinate Ca(2+). A Phosphoserine modification is found at S180. Ca(2+) is bound by residues E183, D209, N211, D213, R215, and E220.

Homodimer; when bound to calcium or magnesium. Interacts (via C-terminus) with ITPR1, ITPR2 and ITPR3. This binding is calcium dependent and the interaction correlates with calcium concentration. An additional calcium-independent interaction with the N-terminus of ITPR1 results in a decreased InsP(3) binding to the receptor. Interacts with CACNA1A (via C-terminal CDB motif) in the pre- and postsynaptic membranes. Interacts with CACNA1D and CACNA1C (via C-terminal C and IQ motifs). The binding to the C motif is calcium independent whereas the binding to IQ requires the presence of calcium and is mutually exclusive with calmodulin binding. Interacts with TRPC5 (via C-terminus). Interacts (via EF-hands 1 and 2) at microtubules with MAP1LC3B. Interacts with MYO1C. Interacts (via EF-hands 1 and 2) with NSMF (via the central NLS-containing motif region), the interaction occurs in a calcium dependent manner after synaptic NMDA receptor stimulation and prevents nuclear import of NSMF. Interacts with SPACA9 homolog. In terms of processing, phosphorylated. The phosphorylation regulates the activity. Expressed in the inner retina, specifically in amacrine cells and in cone OFF-bipolar cells (at protein level).

Modulates calcium-dependent activity of inositol 1,4,5-triphosphate receptors (ITPRs). Inhibits agonist-induced intracellular calcium signaling. Enhances inactivation and does not support calcium-dependent facilitation of voltage-dependent P/Q-type calcium channels. Causes calcium-dependent facilitation and inhibits inactivation of L-type calcium channels by binding to the same sites as calmodulin in the C-terminal domain of CACNA1C, but has an opposite effect on channel function. Suppresses the calcium-dependent inactivation of CACNA1D. Inhibits TRPC5 channels. Prevents NMDA receptor-induced cellular degeneration. Required for the normal transfer of light signals through the retina. The sequence is that of Calcium-binding protein 1 (Cabp1) from Mus musculus (Mouse).